The sequence spans 345 residues: Putative RING-H2 finger protein ATL36 (345 aa).

An N-terminal signal peptide occupies residues 1–31 (MNIFTRYHLPRVVSGVILPLFLFHLLPYVTC). A helical transmembrane segment spans residues 50–70 (SIIAIVVLAIFISLGMVSCCL). The RING-type; atypical zinc-finger motif lies at 123–165 (CAICLSEFEDQETLRWMPPCSHTFHANCIDVWLSSWSTCPVCR). Serine 264 carries the post-translational modification Phosphoserine.

It belongs to the RING-type zinc finger family. ATL subfamily.

It localises to the membrane. It catalyses the reaction S-ubiquitinyl-[E2 ubiquitin-conjugating enzyme]-L-cysteine + [acceptor protein]-L-lysine = [E2 ubiquitin-conjugating enzyme]-L-cysteine + N(6)-ubiquitinyl-[acceptor protein]-L-lysine.. The protein operates within protein modification; protein ubiquitination. In Arabidopsis thaliana (Mouse-ear cress), this protein is Putative RING-H2 finger protein ATL36 (ATL36).